We begin with the raw amino-acid sequence, 127 residues long: Glycine cleavage system H protein (127 aa).

Residues 24–105 enclose the Lipoyl-binding domain; sequence TALVGITDFA…YNDGWLVKMK (82 aa). At Lys-65 the chain carries N6-lipoyllysine.

It belongs to the GcvH family. In terms of assembly, the glycine cleavage system is composed of four proteins: P, T, L and H. The cofactor is (R)-lipoate.

The glycine cleavage system catalyzes the degradation of glycine. The H protein shuttles the methylamine group of glycine from the P protein to the T protein. In Pelodictyon phaeoclathratiforme (strain DSM 5477 / BU-1), this protein is Glycine cleavage system H protein.